Reading from the N-terminus, the 303-residue chain is 4-hydroxy-tetrahydrodipicolinate synthase (303 aa).

Thr-57 is a binding site for pyruvate. Residue Tyr-143 is the Proton donor/acceptor of the active site. Catalysis depends on Lys-171, which acts as the Schiff-base intermediate with substrate. Ile-211 provides a ligand contact to pyruvate.

It belongs to the DapA family. As to quaternary structure, homotetramer; dimer of dimers.

It is found in the cytoplasm. The enzyme catalyses L-aspartate 4-semialdehyde + pyruvate = (2S,4S)-4-hydroxy-2,3,4,5-tetrahydrodipicolinate + H2O + H(+). The protein operates within amino-acid biosynthesis; L-lysine biosynthesis via DAP pathway; (S)-tetrahydrodipicolinate from L-aspartate: step 3/4. In terms of biological role, catalyzes the condensation of (S)-aspartate-beta-semialdehyde [(S)-ASA] and pyruvate to 4-hydroxy-tetrahydrodipicolinate (HTPA). This Bifidobacterium animalis subsp. lactis (strain AD011) protein is 4-hydroxy-tetrahydrodipicolinate synthase.